We begin with the raw amino-acid sequence, 299 residues long: Acetylglutamate kinase (299 aa).

Substrate contacts are provided by residues 72–73 (GG), Arg94, and Asn196.

Belongs to the acetylglutamate kinase family. ArgB subfamily.

It localises to the cytoplasm. The catalysed reaction is N-acetyl-L-glutamate + ATP = N-acetyl-L-glutamyl 5-phosphate + ADP. It functions in the pathway amino-acid biosynthesis; L-arginine biosynthesis; N(2)-acetyl-L-ornithine from L-glutamate: step 2/4. Catalyzes the ATP-dependent phosphorylation of N-acetyl-L-glutamate. This chain is Acetylglutamate kinase, found in Burkholderia cenocepacia (strain ATCC BAA-245 / DSM 16553 / LMG 16656 / NCTC 13227 / J2315 / CF5610) (Burkholderia cepacia (strain J2315)).